The following is a 284-amino-acid chain: MNHVKKPDWLKINIGANARYTETKHIVDSHKLHTICSSGRCPNMGECWGKGTATFMIGGEICTRSCKFCNTQTGRPLPLDPEEPTHVAESIQLMKLSHAVITSVDRDDLDDLGAAHWAKTISEIKRLNPETTTEVLIPDFQGKSELIQLVIDAKPDIISHNMETVRRISPLVRSAANYATSLKVIKQIANNGITAKSGIMVGLGERPEEVEEVMDDLLAQGCKILTIGQYLQPTHRHYPVAEYITPDQFKQYRTIGLKKGFREVESAPLVRSSYHAEKHIKFKG.

7 residues coordinate [4Fe-4S] cluster: Cys36, Cys41, Cys47, Cys62, Cys66, Cys69, and Ser273. One can recognise a Radical SAM core domain in the interval 48–262 (WGKGTATFMI…RTIGLKKGFR (215 aa)).

This sequence belongs to the radical SAM superfamily. Lipoyl synthase family. The cofactor is [4Fe-4S] cluster.

It localises to the cytoplasm. It carries out the reaction [[Fe-S] cluster scaffold protein carrying a second [4Fe-4S](2+) cluster] + N(6)-octanoyl-L-lysyl-[protein] + 2 oxidized [2Fe-2S]-[ferredoxin] + 2 S-adenosyl-L-methionine + 4 H(+) = [[Fe-S] cluster scaffold protein] + N(6)-[(R)-dihydrolipoyl]-L-lysyl-[protein] + 4 Fe(3+) + 2 hydrogen sulfide + 2 5'-deoxyadenosine + 2 L-methionine + 2 reduced [2Fe-2S]-[ferredoxin]. It participates in protein modification; protein lipoylation via endogenous pathway; protein N(6)-(lipoyl)lysine from octanoyl-[acyl-carrier-protein]: step 2/2. Catalyzes the radical-mediated insertion of two sulfur atoms into the C-6 and C-8 positions of the octanoyl moiety bound to the lipoyl domains of lipoate-dependent enzymes, thereby converting the octanoylated domains into lipoylated derivatives. The protein is Lipoyl synthase of Phocaeicola vulgatus (strain ATCC 8482 / DSM 1447 / JCM 5826 / CCUG 4940 / NBRC 14291 / NCTC 11154) (Bacteroides vulgatus).